Consider the following 921-residue polypeptide: GPI ethanolamine phosphate transferase 1 (921 aa).

The Cytoplasmic portion of the chain corresponds to 1 to 9 (MKNNTRFTL). Residues 10–30 (IVVGVLFHLLYLWSIFDIYFI) traverse the membrane as a helical segment. Residues 31–457 (SPLVHGMEQK…TTYNWRFIRT (427 aa)) lie on the Lumenal side of the membrane. N-linked (GlcNAc...) asparagine glycosylation is found at asparagine 90, asparagine 138, asparagine 198, asparagine 262, and asparagine 286. Residues 458 to 478 (IVTFGFLGWICYSFMIFLKLF) form a helical membrane-spanning segment. The Cytoplasmic portion of the chain corresponds to 479-488 (ILNNSQTTHP). The helical transmembrane segment at 489-509 (SILNISIFTSLGLILNYILFY) threads the bilayer. Topologically, residues 510–516 (QKSPLNF) are lumenal. The chain crosses the membrane as a helical span at residues 517 to 537 (YLYLIFPLFFWSKIFSNTAII). Over 538–552 (RDGVNEFFKGISKAE) the chain is Cytoplasmic. A helical membrane pass occupies residues 553-573 (SVIIGLTIISIYEGIVYGFFH). The Lumenal segment spans residues 574 to 575 (RW). The helical transmembrane segment at 576 to 596 (ILSLILVSFAFYPLVCGVTDL) threads the bilayer. Residues 597 to 599 (FTN) are Cytoplasmic-facing. Residues 600 to 620 (LLWILTSVGLSSFTLLDAVKI) traverse the membrane as a helical segment. Position 621 (glutamate 621) is a topological domain, lumenal. The helical transmembrane segment at 622–642 (NLQQIQVAGILIVLSSAYAVM) threads the bilayer. Residues 643–654 (RLSQDISKYTQH) lie on the Cytoplasmic side of the membrane. The helical transmembrane segment at 655–675 (LLSIQIFLVSGMLHFTSKSVI) threads the bilayer. Residues 676 to 684 (SLQKREGLP) are Lumenal-facing. A helical transmembrane segment spans residues 685–705 (AFAQVGGWAILVISLTIMPFL). Residues 706–728 (HYLKPNNNYQVRLLTIYLTFAPS) are Cytoplasmic-facing. Residues 729–749 (FIILSISFEALFYFIFTAYIV) traverse the membrane as a helical segment. The Lumenal portion of the chain corresponds to 750–777 (QWLQIEKNIKVLKDEQKSDSNGIQLLRV). A helical transmembrane segment spans residues 778–798 (AIIGFFLQQIAFFGTGNVASI). At 799–819 (SSFSLDSVYRLLPVFDPFPMG) the chain is on the cytoplasmic side. Residues 820 to 840 (ALLMLKLIIPYVLLSCGLGIM) form a helical membrane-spanning segment. Topologically, residues 841-849 (NIQLDIKDY) are lumenal. Residues 850-870 (TISSLIISTSDILSLNFFYLL) traverse the membrane as a helical segment. At 871–878 (KTEGSWLD) the chain is on the cytoplasmic side. A helical transmembrane segment spans residues 879–899 (IGVTISNYCLAILSSLFMLIL). The Lumenal portion of the chain corresponds to 900–921 (EIVGHQLLKNVTRATSSQKKTN). N-linked (GlcNAc...) asparagine glycosylation occurs at asparagine 909.

The protein belongs to the PIGG/PIGN/PIGO family. PIGN subfamily.

It is found in the endoplasmic reticulum membrane. The protein operates within glycolipid biosynthesis; glycosylphosphatidylinositol-anchor biosynthesis. Its function is as follows. Ethanolamine phosphate transferase involved in glycosylphosphatidylinositol-anchor biosynthesis. Transfers ethanolamine phosphate to the first alpha-1,4-linked mannose of the glycosylphosphatidylinositol precursor of GPI-anchor. This Candida glabrata (strain ATCC 2001 / BCRC 20586 / JCM 3761 / NBRC 0622 / NRRL Y-65 / CBS 138) (Yeast) protein is GPI ethanolamine phosphate transferase 1 (MCD4).